Reading from the N-terminus, the 176-residue chain is Cytochrome c oxidase subunit 4 isoform 2, mitochondrial (176 aa).

Residues 1–28 (MLRLTAGRVRSLLAGRATAAFSTSSARM) constitute a mitochondrion transit peptide. Over 29-106 (ASHDLEVAES…TYSEMKQPSS (78 aa)) the chain is Mitochondrial matrix. A helical transmembrane segment spans residues 107–132 (EWKTVFGGIFIFLGFTGLVVWWQALY). At 133–176 (VYPPRPRTFDDEWKAKQLKRMLDMRVNPIEGFSAKWDYEKGQWK) the chain is on the mitochondrial intermembrane side.

It belongs to the cytochrome c oxidase IV family. In terms of assembly, component of the cytochrome c oxidase (complex IV, CIV), a multisubunit enzyme composed of 14 subunits. The complex is composed of a catalytic core of 3 subunits MT-CO1, MT-CO2 and MT-CO3, encoded in the mitochondrial DNA, and 11 supernumerary subunits COX4I, COX5A, COX5B, COX6A, COX6B, COX6C, COX7A, COX7B, COX7C, COX8 and NDUFA4, which are encoded in the nuclear genome. The complex exists as a monomer or a dimer and forms supercomplexes (SCs) in the inner mitochondrial membrane with NADH-ubiquinone oxidoreductase (complex I, CI) and ubiquinol-cytochrome c oxidoreductase (cytochrome b-c1 complex, complex III, CIII), resulting in different assemblies (supercomplex SCI(1)III(2)IV(1) and megacomplex MCI(2)III(2)IV(2)).

It is found in the mitochondrion inner membrane. Its pathway is energy metabolism; oxidative phosphorylation. Its function is as follows. Component of the cytochrome c oxidase, the last enzyme in the mitochondrial electron transport chain which drives oxidative phosphorylation. The respiratory chain contains 3 multisubunit complexes succinate dehydrogenase (complex II, CII), ubiquinol-cytochrome c oxidoreductase (cytochrome b-c1 complex, complex III, CIII) and cytochrome c oxidase (complex IV, CIV), that cooperate to transfer electrons derived from NADH and succinate to molecular oxygen, creating an electrochemical gradient over the inner membrane that drives transmembrane transport and the ATP synthase. Cytochrome c oxidase is the component of the respiratory chain that catalyzes the reduction of oxygen to water. Electrons originating from reduced cytochrome c in the intermembrane space (IMS) are transferred via the dinuclear copper A center (CU(A)) of subunit 2 and heme A of subunit 1 to the active site in subunit 1, a binuclear center (BNC) formed by heme A3 and copper B (CU(B)). The BNC reduces molecular oxygen to 2 water molecules using 4 electrons from cytochrome c in the IMS and 4 protons from the mitochondrial matrix. The polypeptide is Cytochrome c oxidase subunit 4 isoform 2, mitochondrial (Thunnus obesus (Bigeye tuna)).